Consider the following 362-residue polypeptide: Adenosine deaminase (362 aa).

Histidine 19 and histidine 21 together coordinate Zn(2+). Substrate-binding residues include histidine 21, aspartate 23, and glycine 181. A Zn(2+)-binding site is contributed by histidine 208. The active-site Proton donor is the glutamate 211. Residue aspartate 300 participates in Zn(2+) binding.

This sequence belongs to the metallo-dependent hydrolases superfamily. Adenosine and AMP deaminases family. Adenosine deaminase subfamily. The cofactor is Zn(2+).

It catalyses the reaction adenosine + H2O + H(+) = inosine + NH4(+). It carries out the reaction 2'-deoxyadenosine + H2O + H(+) = 2'-deoxyinosine + NH4(+). In terms of biological role, catalyzes the hydrolytic deamination of adenosine and 2-deoxyadenosine. This is Adenosine deaminase from Mycobacterium ulcerans (strain Agy99).